The following is a 230-amino-acid chain: Probable C4-dicarboxylate response regulator DctR (230 aa).

The 117-residue stretch at 8-124 (RVLLIEDDPM…RLKAALTQYE (117 aa)) folds into the Response regulatory domain. Asp59 carries the 4-aspartylphosphate modification. The H-T-H motif DNA-binding region spans 183–209 (EEIGRDVGLARVTVRRYLNYLESVGQV).

In terms of processing, phosphorylated by DctS.

Its subcellular location is the cytoplasm. Member of the two-component regulatory system DctS/DctR. Essential for expression of DctP. In Halalkalibacterium halodurans (strain ATCC BAA-125 / DSM 18197 / FERM 7344 / JCM 9153 / C-125) (Bacillus halodurans), this protein is Probable C4-dicarboxylate response regulator DctR (dctR).